We begin with the raw amino-acid sequence, 183 residues long: Adenine phosphoribosyltransferase (183 aa).

Belongs to the purine/pyrimidine phosphoribosyltransferase family. As to quaternary structure, homodimer.

The protein resides in the cytoplasm. It carries out the reaction AMP + diphosphate = 5-phospho-alpha-D-ribose 1-diphosphate + adenine. The protein operates within purine metabolism; AMP biosynthesis via salvage pathway; AMP from adenine: step 1/1. In terms of biological role, catalyzes a salvage reaction resulting in the formation of AMP, that is energically less costly than de novo synthesis. The chain is Adenine phosphoribosyltransferase from Corynebacterium kroppenstedtii (strain DSM 44385 / JCM 11950 / CIP 105744 / CCUG 35717).